The chain runs to 990 residues: Insulin-degrading enzyme (990 aa).

Histidine 81 is a binding site for Zn(2+). The active-site Proton acceptor is glutamate 84. Residues histidine 85 and glutamate 162 each coordinate Zn(2+).

The protein belongs to the peptidase M16 family. Zn(2+) is required as a cofactor.

The catalysed reaction is Degradation of insulin, glucagon and other polypeptides. No action on proteins.. Its function is as follows. Can cleave insulin and TGF-alpha. The sequence is that of Insulin-degrading enzyme (Ide) from Drosophila melanogaster (Fruit fly).